Reading from the N-terminus, the 1025-residue chain is Multidrug resistance protein MdtC (1025 aa).

At 1-6 (MKFFAL) the chain is on the cytoplasmic side. Residues 7-29 (FIYRPVATILLSVAITLCGILGF) traverse the membrane as a helical segment. At 30–335 (RMLPVAPLPQ…TIRASLEEVE (306 aa)) the chain is on the periplasmic side. A helical transmembrane segment spans residues 336–353 (QTLIISVALVILVVFLFL). The Cytoplasmic portion of the chain corresponds to 354–359 (RSGRAT). The chain crosses the membrane as a helical span at residues 360–379 (IIPAVAVPVSLIGTFAAMYL). Residues 380-388 (CGFSLNNLS) lie on the Periplasmic side of the membrane. A helical membrane pass occupies residues 389-411 (LMALTIATGFVVDDAIVVLENIA). Residues 412–430 (RHLEAGMKPLQAALQGTRE) lie on the Cytoplasmic side of the membrane. The chain crosses the membrane as a helical span at residues 431 to 453 (VGFTVLSMSLSLVAVFLPLLLMG). Topologically, residues 454–467 (GLPGRLLREFAVTL) are periplasmic. A helical transmembrane segment spans residues 468-490 (SVAIGISLLVSLTLTPMMCGWML). Over 491–852 (KASKPREQKR…QVFQETMNSQ (362 aa)) the chain is Cytoplasmic. The chain crosses the membrane as a helical span at residues 853 to 875 (VILIIAAIATVYIVLGILYESYV). The Periplasmic portion of the chain corresponds to 876–894 (HPLTILSTLPSAGVGALLA). A helical transmembrane segment spans residues 895 to 917 (LELFNAPFSLIALIGIMLLIGIV). Residues 918-947 (KKNAIMMVDFALEAQRHGNLTPQEAIFQAC) are Cytoplasmic-facing. The chain crosses the membrane as a helical span at residues 948–970 (LLRFRPIMMTTLAALFGALPLVL). Over 971–984 (SGGDGSELRQPLGI) the chain is Periplasmic. The chain crosses the membrane as a helical span at residues 985–1007 (TIVGGLVMSQLLTLYTTPVVYLF). At 1008-1025 (FDRLRLRFSRKPKQAVTE) the chain is on the cytoplasmic side.

The protein belongs to the resistance-nodulation-cell division (RND) (TC 2.A.6) family. MdtC subfamily. In terms of assembly, part of a tripartite efflux system composed of MdtA, MdtB and MdtC. MdtC forms a heteromultimer with MdtB.

It is found in the cell inner membrane. Its function is as follows. The MdtABC tripartite complex confers resistance against novobiocin and deoxycholate. The protein is Multidrug resistance protein MdtC of Escherichia coli O6:H1 (strain CFT073 / ATCC 700928 / UPEC).